The following is a 69-amino-acid chain: FXYD domain-containing ion transport regulator 11 (69 aa).

Positions 1 to 22 are cleaved as a signal peptide; sequence MSQLTELVLLTVFLALFSRAEA. The Extracellular portion of the chain corresponds to 23–33; the sequence is NPFVYNYEALR. Residues 34–54 traverse the membrane as a helical segment; that stretch reads IGGLVFTCVLVAGAVTALCWG. Over 55 to 69 the chain is Cytoplasmic; it reads QCKPKRKHDDDASKI.

It belongs to the FXYD family. In terms of tissue distribution, detected in adult gill and in larval skin at 2 days post-fertilization (at protein level). In adult gill, strong expression is found in the basal regions of the secondary lamellae.

It is found in the cell membrane. Its function is as follows. May modulate the activity of a sodium/potassium-transporting ATPase. The chain is FXYD domain-containing ion transport regulator 11 from Danio rerio (Zebrafish).